We begin with the raw amino-acid sequence, 238 residues long: Orotate phosphoribosyltransferase (238 aa).

Lysine 29 serves as a coordination point for 5-phospho-alpha-D-ribose 1-diphosphate. 37–38 (FF) contacts orotate. 5-phospho-alpha-D-ribose 1-diphosphate-binding positions include 87–88 (YK), arginine 118, lysine 119, lysine 122, histidine 124, and 144–152 (DDVITAGTA). Threonine 148 and arginine 176 together coordinate orotate.

The protein belongs to the purine/pyrimidine phosphoribosyltransferase family. PyrE subfamily. Homodimer.

The enzyme catalyses orotidine 5'-phosphate + diphosphate = orotate + 5-phospho-alpha-D-ribose 1-diphosphate. Its pathway is pyrimidine metabolism; UMP biosynthesis via de novo pathway; UMP from orotate: step 1/2. Its function is as follows. Catalyzes the transfer of a ribosyl phosphate group from 5-phosphoribose 1-diphosphate to orotate, leading to the formation of orotidine monophosphate (OMP). In Coccidioides immitis (strain RS) (Valley fever fungus), this protein is Orotate phosphoribosyltransferase (URA5).